The sequence spans 935 residues: MITHGFYARTRHKHKLKKTFIMLSAGLGLFFYVNQNSFANGENYFKLSSDSKLLTQNVAQDRLFYTLKTGETVSSISKSQGISLSVIWSLNKHLYSSESEMLKAAPGQQIILPLKKLSVEYGALPVLGSAPVVAAGGVAGHTNKMTKMSPDATQSNMTDDRALNYTAQQAASLGSQLQSRSLHGDYAKDTALGIAGNQASSQLQAWLQHYGTAEVNLQSGNNFDGSSLDFLLPFYDSEKMLAFGQVGARYIDSRFTANLGAGQRFFLPENMLGYNVFIDQDFSGDNTRLGIGGEYWRDYFKSSVNGYFRMSGWHESYNKKDYDERPANGFDIRFNGYLPSYPALGAKLMYEQYYGDNVALFNSDKLQSNPGAATVGVNYTPIPLVTMGIDYRHGTGYENDLLYSMQFRYQFDKPWSPQIEPQYVNELRTLSGSRYDLVQRNNNIILEYKKQDILSLNIPHDINGTEHSTQKIQLIVKSKYGLDRIVWDDSALRSQGGQIQHSGSQSAQDYQAILPAYVQGGSNIYKVTARAYDRNGNSSNNVQLTITVLSNGQVVDQVGVTDFTADKTSAKADGTEAITYTATVKKNGVTQANVPVSFNIVSGTATLGANSATTDANGKATVTLKSSTPGQVVVSAKTAEMTSALNASAVIFVEQTKASITEIKADKTTAVANGNDAVTYTVKVMKEGQPVHGHSVAFTTNFGMFNGKSQTQNATTGSDGRATITLTSSSAGKATVSATVSGGNDVKAPEVTFFDGLKIDNKVDILGKNVTGDLPNIWLQYGQFKLKVSGGNGTYSWHSENTNIATVDESGKVTLKGKGTAVINVTSGDKQTVSYTIKAPNYMIRVGNKASYANAMSFCGNLLPSSQTVLSNVYNSWGPANGYDHYRSMQSITAWITQTEADKISGVSTTYDLITQNPHKDVSLNAPNVYAVCVE.

The first 41 residues, 1 to 41, serve as a signal peptide directing secretion; that stretch reads MITHGFYARTRHKHKLKKTFIMLSAGLGLFFYVNQNSFANG. The segment at 40 to 153 is peptidoglycan-binding; that stretch reads NGENYFKLSS…KMTKMSPDAT (114 aa). The interval 40-153 is sufficient for homodimerization; the sequence is NGENYFKLSS…KMTKMSPDAT (114 aa). The required for periplasmic localization stretch occupies residues 40 to 212; sequence NGENYFKLSS…LQAWLQHYGT (173 aa). A LysM domain is found at 63 to 112; the sequence is LFYTLKTGETVSSISKSQGISLSVIWSLNKHLYSSESEMLKAAPGQQIIL. The interval 210-411 is inverse autotransporter; it reads YGTAEVNLQS…LYSMQFRYQF (202 aa). The segment at 402-411 is signature sequence for beta-barrel assembly machinery (BAM), which recognizes the unfolded beta-barrel in the periplasm; it reads LYSMQFRYQF. Big-1 domains are found at residues 560-653 and 660-754; these read VTDF…VIFV and ITEI…VTFF. The BIG2 domain occupies 790-834; the sequence is GGNGTYSWHSENTNIATVDESGKVTLKGKGTAVINVTSGDKQTVS. Residues Cys859 and Cys933 are joined by a disulfide bond.

This sequence belongs to the intimin/invasin family. Homodimer. Interacts with Tir.

It is found in the cell outer membrane. Functionally, an inverse autotransporter. Adhesin, which mediates attachment to the human intestine epithelial cells. Necessary for the production of attaching and effacing lesions on infected human tissue culture cells. Anchored to the outer membrane by binding to peptidoglycan (PGN) via its periplasmic domain, thus helping in receptor interactions during host invasion. PGN-binding may also aid in resisting mechanical and chemical stress during transit of the bacterium through the gastrointestinal tract of the host. In Escherichia coli O111:H-, this protein is Intimin (eae).